The sequence spans 349 residues: 5,10-methylenetetrahydromethanopterin reductase (349 aa).

It belongs to the mer family. Homotetramer composed of two loosely associated dimers.

Its subcellular location is the cytoplasm. The catalysed reaction is 5-methyl-5,6,7,8-tetrahydromethanopterin + oxidized coenzyme F420-(gamma-L-Glu)(n) + H(+) = 5,10-methylenetetrahydromethanopterin + reduced coenzyme F420-(gamma-L-Glu)(n). It functions in the pathway one-carbon metabolism; methanogenesis from CO(2); methyl-coenzyme M from 5,10-methylene-5,6,7,8-tetrahydromethanopterin: step 1/2. With respect to regulation, requires the presence of relatively high concentrations of either sulfate or phosphate for maximal activity. In terms of biological role, catalyzes the reversible reduction of methylene-H(4)MPT to methyl-H(4)MPT. This is 5,10-methylenetetrahydromethanopterin reductase from Methanopyrus kandleri (strain AV19 / DSM 6324 / JCM 9639 / NBRC 100938).